The following is a 427-amino-acid chain: Citrate synthase (427 aa).

Lysine 283 carries the N6-acetyllysine modification. Residues histidine 306 and aspartate 363 contribute to the active site.

This sequence belongs to the citrate synthase family. As to quaternary structure, homohexamer.

It catalyses the reaction oxaloacetate + acetyl-CoA + H2O = citrate + CoA + H(+). It participates in carbohydrate metabolism; tricarboxylic acid cycle; isocitrate from oxaloacetate: step 1/2. The protein is Citrate synthase (gltA) of Escherichia coli O6:H1 (strain CFT073 / ATCC 700928 / UPEC).